A 588-amino-acid chain; its full sequence is Phosphomethylpyrimidine synthase (588 aa).

Substrate is bound by residues N212, M241, Y270, H306, 326 to 328 (SRG), 367 to 370 (DGLR), and E406. H410 contacts Zn(2+). Y433 lines the substrate pocket. Position 474 (H474) interacts with Zn(2+). Residues C554, C557, and C562 each coordinate [4Fe-4S] cluster.

This sequence belongs to the ThiC family. Homodimer. The cofactor is [4Fe-4S] cluster.

It carries out the reaction 5-amino-1-(5-phospho-beta-D-ribosyl)imidazole + S-adenosyl-L-methionine = 4-amino-2-methyl-5-(phosphooxymethyl)pyrimidine + CO + 5'-deoxyadenosine + formate + L-methionine + 3 H(+). It participates in cofactor biosynthesis; thiamine diphosphate biosynthesis. Catalyzes the synthesis of the hydroxymethylpyrimidine phosphate (HMP-P) moiety of thiamine from aminoimidazole ribotide (AIR) in a radical S-adenosyl-L-methionine (SAM)-dependent reaction. The chain is Phosphomethylpyrimidine synthase from Bartonella quintana (strain Toulouse) (Rochalimaea quintana).